The chain runs to 138 residues: MRALWIVAVWLIGVEGSVVELGKMIIQETGKSPFPSYTSYGCFCGGGEKGTPKDATDRCCFVHSCCYDKLPDCSPKTDRYKYQRENGEIICENSTSCKKRICECDKAVAVCLRENLQTYNKKYTYYPNFLCKGEPEKC.

The N-terminal stretch at 1–16 (MRALWIVAVWLIGVEG) is a signal peptide. Disulfide bonds link C42/C131, C44/C60, C59/C111, C65/C138, C66/C104, C73/C97, and C91/C102. The tract at residues 121 to 133 (KKYTYYPNFLCKG) is important for membrane-damaging activities in eukaryotes and bacteria; heparin-binding.

This sequence belongs to the phospholipase A2 family. Group II subfamily. S49 sub-subfamily. In terms of assembly, monomer. Expressed by the venom gland.

The protein localises to the secreted. Snake venom phospholipase A2 homolog that lacks enzymatic activity. Shows high myotoxin activities and displays edema-inducing activities. Has cytotoxic activities against HUVEC cells (LC(50)=5.0 uL) and human lung adenocarcinoma A549 cells (LC(50)=5.2 uL). This chain is Phospholipase A2 homolog, found in Echis ocellatus (Ocellated saw-scaled viper).